A 902-amino-acid chain; its full sequence is Protein translocase subunit SecA (902 aa).

Residues glutamine 85, 103–107 (GEGKT), and aspartate 492 each bind ATP. Residues 846–902 (LSYSGGGEEPNQRPKSPRRRSERKIGPNEPCPCGSGKKFKKCHGRVGAPPLPTSQSQ) are disordered. Positions 876, 878, 887, and 888 each coordinate Zn(2+).

This sequence belongs to the SecA family. In terms of assembly, monomer and homodimer. Part of the essential Sec protein translocation apparatus which comprises SecA, SecYEG and auxiliary proteins SecDF. Other proteins may also be involved. Requires Zn(2+) as cofactor.

The protein localises to the cell membrane. It is found in the cytoplasm. The enzyme catalyses ATP + H2O + cellular proteinSide 1 = ADP + phosphate + cellular proteinSide 2.. Functionally, part of the Sec protein translocase complex. Interacts with the SecYEG preprotein conducting channel. Has a central role in coupling the hydrolysis of ATP to the transfer of proteins into and across the cell membrane, serving as an ATP-driven molecular motor driving the stepwise translocation of polypeptide chains across the membrane. The polypeptide is Protein translocase subunit SecA (Rubrobacter xylanophilus (strain DSM 9941 / JCM 11954 / NBRC 16129 / PRD-1)).